Consider the following 359-residue polypeptide: Protein HEXIM1 (359 aa).

The tract at residues M1 to H163 is disordered. Positions Y9–T19 are enriched in polar residues. Basic and acidic residues-rich tracts occupy residues P34–W47 and C84–N93. Phosphoserine occurs at positions 97 and 98. A compositionally biased stretch (basic residues) spans L148–H163. The segment at K150–K177 is basic region; mediates nuclear localization and interaction with 7SK snRNA and NR3C1. The interval P202–T205 is interaction with P-TEFb. Residues M210 to G250 form an autoinhibitory acidic region; in absence of 7SK snRNA interacts with the basic region preventing interaction with P-TEFb and modulating subcellular localization region. The tract at residues H213–F262 is disordered. S233 bears the Phosphoserine mark. T236 carries the post-translational modification Phosphothreonine. Over residues T236–G251 the composition is skewed to acidic residues. S237, S252, and S260 each carry phosphoserine. The stretch at S283–Q349 forms a coiled coil. Positions E286–R314 are mediates interaction with CCNT1. The interval L310–S355 is required for inhibition of ESR1-dependent transcription.

Belongs to the HEXIM family. In terms of assembly, homooligomer and heterooligomer with HEXIM2; probably dimeric. Core component of the 7SK RNP complex, at least composed of 7SK RNA, LARP7, MEPCE, HEXIM1 (or HEXIM2) and P-TEFb (composed of CDK9 and CCNT1/cyclin-T1). Interacts with the N-CoR complex through NCOR1. Interacts with ESR1 and NR3C1. May interact with NF-kappa-B through RELA. Interacts with CCNT2; mediates formation of a tripartite complex with KPNA2. Part of the HDP-RNP complex composed of at least HEXIM1, PRKDC, XRCC5, XRCC6, paraspeckle proteins (SFPQ, NONO, PSPC1, RBM14, and MATR3) and NEAT1 non-coding RNA. As to expression, ubiquitously expressed with higher expression in placenta. HEXIM1 and HEXIM2 are differentially expressed. Expressed in endocrine tissues.

It localises to the nucleus. It is found in the cytoplasm. Functionally, transcriptional regulator which functions as a general RNA polymerase II transcription inhibitor. Core component of the 7SK RNP complex: in cooperation with 7SK snRNA sequesters P-TEFb in a large inactive 7SK snRNP complex preventing RNA polymerase II phosphorylation and subsequent transcriptional elongation. May also regulate NF-kappa-B, ESR1, NR3C1 and CIITA-dependent transcriptional activity. Plays a role in the regulation of DNA virus-mediated innate immune response by assembling into the HDP-RNP complex, a complex that serves as a platform for IRF3 phosphorylation and subsequent innate immune response activation through the cGAS-STING pathway. This Homo sapiens (Human) protein is Protein HEXIM1 (HEXIM1).